The primary structure comprises 313 residues: Putative glycosyltransferase ORF313 (313 aa).

This sequence belongs to the glycosyltransferase group 1 family. Glycosyltransferase 4 subfamily.

The polypeptide is Putative glycosyltransferase ORF313 (Acidianus hospitalis (AFV-1)).